The primary structure comprises 89 residues: MSLSVEAKAKIVADFGRDANDTGSSEVQVALLTAQINHLQGHFSEHKKDHHSRRGLLRMVSTRRKLLDYLKRKDVASYVSLIERLGLRR.

It belongs to the universal ribosomal protein uS15 family. Part of the 30S ribosomal subunit. Forms a bridge to the 50S subunit in the 70S ribosome, contacting the 23S rRNA.

Its function is as follows. One of the primary rRNA binding proteins, it binds directly to 16S rRNA where it helps nucleate assembly of the platform of the 30S subunit by binding and bridging several RNA helices of the 16S rRNA. In terms of biological role, forms an intersubunit bridge (bridge B4) with the 23S rRNA of the 50S subunit in the ribosome. This chain is Small ribosomal subunit protein uS15, found in Yersinia enterocolitica serotype O:8 / biotype 1B (strain NCTC 13174 / 8081).